A 1056-amino-acid polypeptide reads, in one-letter code: MTSPWGHSADLARFYTVTEPQRHPRGYTVYKVTARVVSRRNPEDVQEIIVWRRYSDFKKLHRELWQIHRNAFRHSELFPPFAKGTVFGRFDKTVIEERRQCAEDLLQFSANIPALYNSRQLQDFFKGGVISDGSELIGPAEAYPDSPANAFPECGTEGFSSDSDLLSLTVDADSLAEVDDGMASRQGSPSRTFGLSLSTDSSAVGAVASDSEPSRVEDRESRSLFPSSLKPRLGRRDYLEKAGELIKLALKKEEEDDYEAASDFYRKGVDLLLEGVQGESSPTRREAVKRRTAEYLMRAESICSLRAAPQLHTGPQPPGSLSSRPPWSLRSPAEELKAFRVLGVIDKVLLVMDTRTEQTFILKGLRKSSECSRNRKTIIPRCVPNMVCLHTYIISEESVFLVLQRAEGGKLWSYISKFLNRSSQESLDIKEGRPSMPPRVCLQQPSASPQGGSSFESRGSDTGSMLKALPLKTSLTPSSQDDSNQEDDGQPSSPKWLDSGSSSEDECTAGYLTLCNEYGQEKMDLVSLSEESVMQPEGDKADTQAVSSPASLATGSVSPSTHLRVFSGGEDLEAVSSPPTSESLSRSKNSPMEFFRIDSKDSTSELLGLDFGEKLHSLKPEPLKALFTLEDGDSPSQSLDPGESKRESEAQDSVSRGSDDSVPVISFKEAAAEAISGAEEGRPDLLVNLPGELQPTKEASAMDPKFSQASAGRLDSKLLEAPDVLCLRLSSEQCHGLGPEGPEELSDPTEFCPGGVIPEHDAQADPGVLFEAAVDHRSSPDQFLFSSLRSESDRLGQVEVVVTAQALQESLFHISSPCSGANKEHSAYADTATSEEVLLFTEPTKEEANSLFQRGSEAQERGVGAGEADKEIHQIFEDLDKRLAASSRFFIPEGCIQRWAAEMVVALDALHREGIVCRDLNPNNILLNDGGHIQLTYFSRWSEVEDSCDSDAVARMYCAPEVGAVTEETEACDWWSLGAVLFELLTGKTLVECHPAGINTHTTLNMPGCVSEEARSLIQQLLQFNPMERLGAGVAGVEDIKSHPFFTPVDWAELTR.

The region spanning 8–132 is the PX domain; sequence SADLARFYTV…DFFKGGVISD (125 aa). A disordered region spans residues 204 to 223; it reads VGAVASDSEPSRVEDRESRS. Residues 212–222 are compositionally biased toward basic and acidic residues; it reads EPSRVEDRESR. One can recognise an MIT domain in the interval 276 to 304; sequence VQGESSPTRREAVKRRTAEYLMRAESICS. Ser-281, Ser-422, Ser-423, Ser-426, Ser-446, Ser-448, and Ser-454 each carry phosphoserine. Residues 343–444 form the Protein kinase 1 domain; that stretch reads GVIDKVLLVM…SMPPRVCLQQ (102 aa). The disordered stretch occupies residues 426-504; that stretch reads SLDIKEGRPS…KWLDSGSSSE (79 aa). Over residues 443-454 the composition is skewed to low complexity; sequence QQPSASPQGGSS. The segment covering 473–482 has biased composition (polar residues); it reads TSLTPSSQDD. Residues Ser-493 and Ser-527 each carry the phosphoserine modification. The segment at 529–588 is disordered; it reads SEESVMQPEGDKADTQAVSSPASLATGSVSPSTHLRVFSGGEDLEAVSSPPTSESLSRSK. Over residues 544 to 561 the composition is skewed to polar residues; the sequence is QAVSSPASLATGSVSPST. The segment covering 576 to 587 has biased composition (low complexity); it reads SSPPTSESLSRS. Ser-577, Ser-599, Ser-602, Ser-634, Ser-655, Ser-658, Ser-661, and Ser-787 each carry phosphoserine. The interval 628–662 is disordered; sequence TLEDGDSPSQSLDPGESKRESEAQDSVSRGSDDSV. In terms of domain architecture, Protein kinase 2 spans 789–1046; that stretch reads RSESDRLGQV…VEDIKSHPFF (258 aa). ATP is bound by residues 795–803 and Lys-823; that span reads LGQVEVVVT. The active-site Proton acceptor is the Asp-919.

This sequence belongs to the protein kinase superfamily. Ser/Thr protein kinase family. S6 kinase subfamily. As to quaternary structure, interacts with SPHK1 and phosphatidylinositol 3-phosphate. Interacts (via PX domain) with PRDX3.

It localises to the cytoplasm. The protein localises to the membrane. Its subcellular location is the early endosome. It catalyses the reaction L-seryl-[protein] + ATP = O-phospho-L-seryl-[protein] + ADP + H(+). It carries out the reaction L-threonyl-[protein] + ATP = O-phospho-L-threonyl-[protein] + ADP + H(+). In terms of biological role, may be involved in transmitting sphingosine-1 phosphate (SPP)-mediated signaling into the cell. Plays a role in the recruitment of PRDX3 to early endosomes. In Mus musculus (Mouse), this protein is Ribosomal protein S6 kinase delta-1 (Rps6kc1).